The sequence spans 438 residues: Adenylosuccinate synthetase (438 aa).

Residues 12 to 18 (GDEGKGK) and 40 to 42 (GHT) each bind GTP. Asp-13 acts as the Proton acceptor in catalysis. The Mg(2+) site is built by Asp-13 and Gly-40. Residues 13 to 16 (DEGK), 38 to 41 (NAGH), Thr-128, Arg-142, Gln-223, Thr-238, and Arg-302 each bind IMP. The active-site Proton donor is the His-41. 298–304 (TTTGRPR) contacts substrate. Residues Arg-304, 330–332 (KLD), and 412–414 (GVG) each bind GTP.

This sequence belongs to the adenylosuccinate synthetase family. In terms of assembly, homodimer. Mg(2+) is required as a cofactor.

The protein resides in the cytoplasm. The enzyme catalyses IMP + L-aspartate + GTP = N(6)-(1,2-dicarboxyethyl)-AMP + GDP + phosphate + 2 H(+). Its pathway is purine metabolism; AMP biosynthesis via de novo pathway; AMP from IMP: step 1/2. Its function is as follows. Plays an important role in the de novo pathway of purine nucleotide biosynthesis. Catalyzes the first committed step in the biosynthesis of AMP from IMP. This chain is Adenylosuccinate synthetase, found in Leifsonia xyli subsp. xyli (strain CTCB07).